The sequence spans 2060 residues: Fatty acid synthase subunit beta (2060 aa).

Positions 1–32 (MFPGDMESKASSMNGDQPSSPTPSSSTSVTIP) are disordered. A compositionally biased stretch (low complexity) spans 18 to 32 (PSSPTPSSSTSVTIP). Residues 182 to 543 (VYVIFGGQGN…KAGQGVRVIH (362 aa)) are acetyltransferase (AT) domain. S301 functions as the For acetyltransferase activity in the catalytic mechanism. The segment at 600–845 (TRLFLQPPIM…LIVATEGAPD (246 aa)) is enoyl reductase (ER) domain. The dehydratase (DH) domain stretch occupies residues 1157-1640 (DKNLNWAKAL…CTGDRLAVSM (484 aa)). The 113-residue stretch at 1549-1661 (FEEQEISFTA…VEVQIHKNMA (113 aa)) folds into the MaoC-like domain. Positions 1679–2043 (LVFTGQGSQK…FNEVLRLTGS (365 aa)) are malonyl/palmitoyl transferase (MT/PT) domain. S1824 functions as the For malonyltransferase activity in the catalytic mechanism.

It belongs to the fungal fatty acid synthetase subunit beta family. In terms of assembly, [Alpha(6)beta(6)] hexamers of two multifunctional subunits (alpha and beta).

It catalyses the reaction acetyl-CoA + n malonyl-CoA + 2n NADPH + 4n H(+) = a long-chain-acyl-CoA + n CoA + n CO2 + 2n NADP(+).. It carries out the reaction holo-[ACP] + acetyl-CoA = acetyl-[ACP] + CoA. The catalysed reaction is holo-[ACP] + malonyl-CoA = malonyl-[ACP] + CoA. The enzyme catalyses a (3R)-hydroxyacyl-[ACP] = a (2E)-enoyl-[ACP] + H2O. It catalyses the reaction a 2,3-saturated acyl-[ACP] + NAD(+) = a (2E)-enoyl-[ACP] + NADH + H(+). It carries out the reaction (9Z)-octadecenoyl-[ACP] + H2O = (9Z)-octadecenoate + holo-[ACP] + H(+). It functions in the pathway mycotoxin biosynthesis. In terms of biological role, fatty acid synthase subunit beta; part of the gene cluster that mediates the biosynthesis of gramillins A and B, bicyclic lipopeptides that induce cell death in maize leaves but not in wheat leaves. The nonribosomal peptide synthetase GRA1 incorporates respectively a glutamic adic (Glu), a leucine (Leu), a serine (Ser), a hydroxyglutamine (HOGln), a 2-amino decanoic acid, and 2 cysteins (CysB and CysA). The biosynthesis of 2-amino decanoic acid incorporated in gramillins could be initiated by a fatty acid synthase composed of the alpha and beta subunits FGSG_00036 and FGSG_11656. The cytochrome P450 monooxygenase FGSG_15680 could hydroxylate the fatty acid chain. Subsequent oxidation to the ketone by the oxidoreductase FGSG_00048 and transamination by aminotransferase FGSG_00049 could form 2-amino-decanoic acid. On the other hand, FGSG_15680 could also be responsible for the HO-modified glutamine at the gamma-position. Whether hydroxylation occurs on the fully assembled product or on the Gln residue prior to assembly into the gramillins requires further proof. The thioredoxin FGSG_00043 could also be required for the disulfide-bond formation between CysA and CysB. The specific involvement of the remaining proteins from the cluster is more difficult to discern, but could have broader regulatory (FGSG_00040 and FGSG_11657) or enzymatic functions (FGSG_00044 and FGSG_00045). The final C-domain of GRA1 does not possess the expected sequence of a termination CT domain, often implicated in macrocyclization and release of a cyclopeptidein fungal NRPs; and the thioesterase FGSG_00047 may act in concert with the terminal C-domain of GRA1 to catalyze the formation of the macrocyclic anhydride and release of the products. The polypeptide is Fatty acid synthase subunit beta (Gibberella zeae (strain ATCC MYA-4620 / CBS 123657 / FGSC 9075 / NRRL 31084 / PH-1) (Wheat head blight fungus)).